A 957-amino-acid polypeptide reads, in one-letter code: Dystrophin-related protein 2 (957 aa).

Spectrin repeat units follow at residues aspartate 102–glutamate 179 and glutamate 231–aspartate 337. The WW domain occupies tryptophan 358–proline 383. The ZZ-type; degenerate zinc-finger motif lies at lysine 605 to threonine 661. Cysteine 610, cysteine 613, cysteine 634, and cysteine 637 together coordinate Zn(2+). A Phosphoserine modification is found at serine 748. Low complexity predominate over residues proline 877–glycine 900. A disordered region spans residues proline 877 to serine 923. Threonine 910 bears the Phosphothreonine mark.

In terms of assembly, interacts with PRX; this enhances phosphorylation. Identified in a dystroglycan complex that contains at least PRX, DRP2, UTRN, DMD and DAG1. In terms of tissue distribution, detected in fetal brain.

It localises to the postsynaptic density. Its subcellular location is the cell projection. The protein localises to the dendrite. The protein resides in the perikaryon. It is found in the cell membrane. Functionally, required for normal myelination and for normal organization of the cytoplasm and the formation of Cajal bands in myelinating Schwann cells. Required for normal PRX location at appositions between the abaxonal surface of the myelin sheath and the Schwann cell plasma membrane. Possibly involved in membrane-cytoskeleton interactions of the central nervous system. The protein is Dystrophin-related protein 2 (DRP2) of Homo sapiens (Human).